A 162-amino-acid polypeptide reads, in one-letter code: uncharacterized protein (162 aa).

This sequence to R.meliloti R02472.

This is an uncharacterized protein from Escherichia coli (strain K12).